A 231-amino-acid polypeptide reads, in one-letter code: WAP four-disulfide core domain protein 3 (231 aa).

The first 24 residues, 1–24, serve as a signal peptide directing secretion; the sequence is MMLSCLFLLKALLALGSLESWITA. 4 consecutive WAP domains span residues 26–68, 69–114, 119–162, and 163–207; these read EHAK…CRDI, PKGR…VVPI, LAEF…LGDI, and EGGR…VPPV. 16 cysteine pairs are disulfide-bonded: Cys-33/Cys-57, Cys-40/Cys-61, Cys-44/Cys-56, Cys-50/Cys-65, Cys-76/Cys-102, Cys-85/Cys-106, Cys-89/Cys-101, Cys-95/Cys-110, Cys-126/Cys-150, Cys-133/Cys-154, Cys-137/Cys-149, Cys-143/Cys-158, Cys-170/Cys-195, Cys-178/Cys-199, Cys-182/Cys-194, and Cys-188/Cys-203. Asn-107 is a glycosylation site (N-linked (GlcNAc...) asparagine). N-linked (GlcNAc...) asparagine glycosylation is present at Asn-217.

In terms of tissue distribution, ubiquitously expressed.

The protein resides in the secreted. In Homo sapiens (Human), this protein is WAP four-disulfide core domain protein 3 (WFDC3).